A 433-amino-acid polypeptide reads, in one-letter code: Enolase (433 aa).

Gln-167 contacts (2R)-2-phosphoglycerate. Glu-209 (proton donor) is an active-site residue. Asp-246, Glu-291, and Asp-318 together coordinate Mg(2+). The (2R)-2-phosphoglycerate site is built by Lys-343, Arg-372, Ser-373, and Lys-394. Catalysis depends on Lys-343, which acts as the Proton acceptor.

It belongs to the enolase family. In terms of assembly, component of the RNA degradosome, a multiprotein complex involved in RNA processing and mRNA degradation. Mg(2+) is required as a cofactor.

The protein localises to the cytoplasm. It localises to the secreted. The protein resides in the cell surface. It carries out the reaction (2R)-2-phosphoglycerate = phosphoenolpyruvate + H2O. It functions in the pathway carbohydrate degradation; glycolysis; pyruvate from D-glyceraldehyde 3-phosphate: step 4/5. Its function is as follows. Catalyzes the reversible conversion of 2-phosphoglycerate (2-PG) into phosphoenolpyruvate (PEP). It is essential for the degradation of carbohydrates via glycolysis. This Vibrio vulnificus (strain CMCP6) protein is Enolase.